The chain runs to 323 residues: Transcription factor MYB56 (323 aa).

Basic and acidic residues predominate over residues 1–14; that stretch reads MNPNLLEKDLRGKE. A disordered region spans residues 1–84; sequence MNPNLLEKDL…EKSLRMRGKS (84 aa). Over residues 27–60 the composition is skewed to polar residues; it reads NFRSLPNSHTAACKTSLNNPSISRNHPHNKSASV. Over residues 66–78 the composition is skewed to basic and acidic residues; sequence EHGNERGENEKSL. HTH myb-type domains lie at 88 to 139 and 140 to 194; these read TKVC…FNQL and DPRI…ARRT. DNA-binding regions (H-T-H motif) lie at residues 116–138 and 167–190; these read WNLI…WFNQ and WALI…HVIM. The segment at 192–217 is disordered; sequence RRTRESQRQRQQPPPTLSRDAEMTVS.

In terms of assembly, forms homodimer. Interacts with the dephosphorylated active form of BES1 in the nucleus of quiescent center (QC) cells. Interacts with BPM1, BPM2, BPM3, BPM4, BPM5 and BPM6 at the promoter of FLOWERING LOCUS T (FT). In terms of tissue distribution, mostly expressed in flowers (at protein level) and siliques, and, to a lower extent, in roots, stems and leaves. Expressed in embryos (e.g. heart and torpedo stages) and cotyledons, and, at low levels, in roots and inflorescence. Accumulates specifically in root apical meristem quiescent center (QC) and vascular initial cells.

It is found in the nucleus. It localises to the cytoplasm. The protein localises to the cytosol. Acts as a cell-specific local repressor of quiescent center (QC) self-renewal by cell divisions in the primary root. Counteracts brassinosteroid (BR)-mediated cell division in the QC cells. Regulates maternally seed size, especially before the heart stage, promoting both endothelial cells expansion and cell number in the outer integument layer of the seed coat. Modulates the expression of genes involved in cell wall metabolism such as cell division and expansion. Negative regulator of flowering via the repression of FT transcription. In Arabidopsis thaliana (Mouse-ear cress), this protein is Transcription factor MYB56.